Consider the following 443-residue polypeptide: Alpha-amylase (443 aa).

Residues 1–24 form the signal peptide; sequence MHNTLFRTALLAAALGSFSHTASA. Positions 114 and 196 each coordinate substrate. Catalysis depends on aspartate 198, which acts as the Nucleophile. Residue 201 to 202 participates in substrate binding; the sequence is KH. Glutamate 223 functions as the Proton donor in the catalytic mechanism. Positions 228 and 287 each coordinate substrate.

The protein belongs to the glycosyl hydrolase 13 family.

Its subcellular location is the secreted. The enzyme catalyses Endohydrolysis of (1-&gt;4)-alpha-D-glucosidic linkages in polysaccharides containing three or more (1-&gt;4)-alpha-linked D-glucose units.. This Aeromonas hydrophila protein is Alpha-amylase (amyA).